A 198-amino-acid polypeptide reads, in one-letter code: Na(+)-translocating NADH-quinone reductase subunit E (198 aa).

6 helical membrane passes run 11–31, 39–59, 77–97, 110–130, 140–160, and 176–196; these read SIFI…FLAV, MGLG…NNLI, FLSF…LEMA, GIFL…SFMV, VVYG…MAGI, and LGIT…FSGI.

Belongs to the NqrDE/RnfAE family. As to quaternary structure, composed of six subunits; NqrA, NqrB, NqrC, NqrD, NqrE and NqrF.

Its subcellular location is the cell inner membrane. The catalysed reaction is a ubiquinone + n Na(+)(in) + NADH + H(+) = a ubiquinol + n Na(+)(out) + NAD(+). Functionally, NQR complex catalyzes the reduction of ubiquinone-1 to ubiquinol by two successive reactions, coupled with the transport of Na(+) ions from the cytoplasm to the periplasm. NqrA to NqrE are probably involved in the second step, the conversion of ubisemiquinone to ubiquinol. The chain is Na(+)-translocating NADH-quinone reductase subunit E from Aeromonas salmonicida (strain A449).